The chain runs to 557 residues: Aspartate--tRNA ligase (557 aa).

Glutamate 168 serves as a coordination point for L-aspartate. The interval 192-195 (QIYK) is aspartate. Arginine 214 provides a ligand contact to L-aspartate. Residues 214-216 (RDE) and glutamine 223 each bind ATP. Residue histidine 423 coordinates L-aspartate. Residue glutamate 457 participates in ATP binding. Arginine 464 lines the L-aspartate pocket. 505–508 (GLDR) provides a ligand contact to ATP.

This sequence belongs to the class-II aminoacyl-tRNA synthetase family. Type 1 subfamily. As to quaternary structure, homodimer.

It localises to the cytoplasm. It catalyses the reaction tRNA(Asp) + L-aspartate + ATP = L-aspartyl-tRNA(Asp) + AMP + diphosphate. Catalyzes the attachment of L-aspartate to tRNA(Asp) in a two-step reaction: L-aspartate is first activated by ATP to form Asp-AMP and then transferred to the acceptor end of tRNA(Asp). The polypeptide is Aspartate--tRNA ligase (Mycoplasma pneumoniae (strain ATCC 29342 / M129 / Subtype 1) (Mycoplasmoides pneumoniae)).